The primary structure comprises 276 residues: NAC domain-containing protein 67 (276 aa).

Positions 17-170 (LPPGFRFHPT…DWVLCRLYNK (154 aa)) constitute an NAC domain.

Expressed in leaf blades.

Its subcellular location is the nucleus. Probable transcription factor involved in stress response. The protein is NAC domain-containing protein 67 of Oryza sativa subsp. japonica (Rice).